A 282-amino-acid polypeptide reads, in one-letter code: 2-dehydro-3-deoxyphosphooctonate aldolase (282 aa).

This sequence belongs to the KdsA family.

Its subcellular location is the cytoplasm. The catalysed reaction is D-arabinose 5-phosphate + phosphoenolpyruvate + H2O = 3-deoxy-alpha-D-manno-2-octulosonate-8-phosphate + phosphate. Its pathway is carbohydrate biosynthesis; 3-deoxy-D-manno-octulosonate biosynthesis; 3-deoxy-D-manno-octulosonate from D-ribulose 5-phosphate: step 2/3. The protein operates within bacterial outer membrane biogenesis; lipopolysaccharide biosynthesis. This Bartonella bacilliformis (strain ATCC 35685 / KC583 / Herrer 020/F12,63) protein is 2-dehydro-3-deoxyphosphooctonate aldolase.